A 464-amino-acid polypeptide reads, in one-letter code: Formin-like protein 19 (464 aa).

Residues 1–74 (MSLVDISGAY…PRPCSRPPKT (74 aa)) form a disordered region. Residues 14–70 (PLPPPPPPLMRRRAPLPPPPPPPLMRRRAPPPPPPPLMRRRAPPPPPPPPLPRPCSR) are compositionally biased toward pro residues. Positions 68 to 462 (CSRPPKTKCS…KAAKEAEMEK (395 aa)) constitute an FH2 domain.

This sequence belongs to the formin-like family. Class-II subfamily.

The polypeptide is Formin-like protein 19 (FH19) (Arabidopsis thaliana (Mouse-ear cress)).